A 417-amino-acid polypeptide reads, in one-letter code: Voltage-gated ClC-type chloride channel ClcB (417 aa).

10 consecutive transmembrane segments (helical) span residues 5–25 (LLIA…FRHA), 54–74 (LITP…WQKM), 146–166 (LWIA…PLAG), 168–188 (LFIA…PVVV), 222–242 (VMIV…MWLM), 258–278 (WQLA…PTVW), 288–308 (FLLS…KILA), 316–336 (GAPG…GMFL), 349–371 (EIAI…HAPI), and 380–400 (MTGE…ASVL).

The protein belongs to the chloride channel (TC 2.A.49) family. ClcB subfamily.

Its subcellular location is the cell inner membrane. Probably acts as an electrical shunt for an outwardly-directed proton pump that is linked to amino acid decarboxylation, as part of the extreme acid resistance (XAR) response. This Salmonella dublin (strain CT_02021853) protein is Voltage-gated ClC-type chloride channel ClcB.